Here is a 134-residue protein sequence, read N- to C-terminus: Agouti-related protein (134 aa).

Residues 1–20 (MLTTMLLSCALLLAMPTMLG) form the signal peptide. Positions 21-84 (AQIGLAPLEG…VLDPEGRKAR (64 aa)) are excised as a propeptide. Cystine bridges form between cysteine 89–cysteine 104, cysteine 96–cysteine 110, cysteine 103–cysteine 121, cysteine 107–cysteine 131, and cysteine 112–cysteine 119. The Agouti domain maps to 89–131 (CVRLHESCLGHQVPCCDPCATCYCRFFNAFCYCRKLGTATNPC). An interaction with melanocortin receptors region spans residues 113–115 (RFF).

As to quaternary structure, interacts with melanocortin receptors MC3R, MC4R and MC5R.

The protein resides in the secreted. Its subcellular location is the golgi apparatus lumen. In terms of biological role, plays a role in weight homeostasis. Involved in the control of feeding behavior through the central melanocortin system. Acts as alpha melanocyte-stimulating hormone antagonist by inhibiting cAMP production mediated by stimulation of melanocortin receptors within the hypothalamus and adrenal gland. Has very low activity with MC5R. Is an inverse agonist for MC3R and MC4R being able to suppress their constitutive activity. It promotes MC3R and MC4R endocytosis in an arrestin-dependent manner. This Sus scrofa (Pig) protein is Agouti-related protein (AGRP).